Here is a 403-residue protein sequence, read N- to C-terminus: Acetate kinase (403 aa).

Asn-7 is a binding site for Mg(2+). Lys-14 provides a ligand contact to ATP. Residue Arg-90 coordinates substrate. The active-site Proton donor/acceptor is the Asp-147. ATP-binding positions include 207–211, 283–285, and 331–335; these read HIGNG, DMR, and GVGEN. A Mg(2+)-binding site is contributed by Glu-386.

Belongs to the acetokinase family. In terms of assembly, homodimer. Mg(2+) serves as cofactor. Mn(2+) is required as a cofactor.

The protein resides in the cytoplasm. The enzyme catalyses acetate + ATP = acetyl phosphate + ADP. The protein operates within metabolic intermediate biosynthesis; acetyl-CoA biosynthesis; acetyl-CoA from acetate: step 1/2. Its function is as follows. Catalyzes the formation of acetyl phosphate from acetate and ATP. Can also catalyze the reverse reaction. This is Acetate kinase from Thermotoga petrophila (strain ATCC BAA-488 / DSM 13995 / JCM 10881 / RKU-1).